We begin with the raw amino-acid sequence, 58 residues long: Large ribosomal subunit protein bL32 (58 aa).

This sequence belongs to the bacterial ribosomal protein bL32 family.

This is Large ribosomal subunit protein bL32 from Prochlorococcus marinus (strain MIT 9515).